A 122-amino-acid chain; its full sequence is Large ribosomal subunit protein bL17 (122 aa).

The protein belongs to the bacterial ribosomal protein bL17 family. As to quaternary structure, part of the 50S ribosomal subunit. Contacts protein L32.

This chain is Large ribosomal subunit protein bL17, found in Staphylococcus aureus (strain Mu3 / ATCC 700698).